A 109-amino-acid polypeptide reads, in one-letter code: CRISPR-associated endoribonuclease Cas2 (109 aa).

Aspartate 8 contacts Mg(2+).

The protein belongs to the CRISPR-associated endoribonuclease Cas2 protein family. As to quaternary structure, homodimer, forms a heterotetramer with a Cas1 homodimer. It depends on Mg(2+) as a cofactor.

CRISPR (clustered regularly interspaced short palindromic repeat), is an adaptive immune system that provides protection against mobile genetic elements (viruses, transposable elements and conjugative plasmids). CRISPR clusters contain sequences complementary to antecedent mobile elements and target invading nucleic acids. CRISPR clusters are transcribed and processed into CRISPR RNA (crRNA). Functions as a ssRNA-specific endoribonuclease. Involved in the integration of spacer DNA into the CRISPR cassette. The polypeptide is CRISPR-associated endoribonuclease Cas2 (Streptococcus mutans serotype c (strain ATCC 700610 / UA159)).